A 477-amino-acid chain; its full sequence is MAATTTATSLFSSRLHFQNQNQGYGFPAKTPNSLQVNQIIDGRKMRNATVLSAASTDKAITTAQSVAPTACDRVRRHTISVFVGDESGIINRIAGVFARRGYNIESLAVGLNEDKALFTIVVLGTDKVLQQVVEQLNKLVNVIKVEDLSKEPHVERELMLIKLNADPSTRSEIMWLVDIFRAKIVDTSEQSLTIEVTGDPGKMVALTTNLEKFGIKEIARTGKIALRREKMGETAPFWRFSAASYPHLVKESSHETVAEKTKLALTGNGNASSGGDVYPVEPYNDFKPVLDAHWGMVYDEDSSGLRSHTLSLLVANVPGVLNLITGAISRRGYNIQSLAVGPAEKEGLSRITTVIPGTDENIDKLVRQLQKLIDLQEIQNITHMPFAERELMLIKVAADTSARRDVLDIAQVFRAKAIDVSDHTITLEVTGDLRKMSALQTQLEAYGICEVARTGRVALVRESGVDSTYLRGYSLPL.

The transit peptide at 1–53 directs the protein to the chloroplast; it reads MAATTTATSLFSSRLHFQNQNQGYGFPAKTPNSLQVNQIIDGRKMRNATVLSA. ACT domains follow at residues 78 to 150 and 309 to 383; these read TISV…DLSK and TLSL…NITH. Residues Asp85, Ile89, Ile90, Asn103, Ile104, Asn316, Val320, Leu321, Asn334, and Ile335 each coordinate L-valine.

It belongs to the acetolactate synthase small subunit family. In terms of assembly, the acetolactate synthase complex contains 4 homodimers of the large catalytic subunits, and 1 homotetramer of the small regulatory subunits. Expressed in roots in the vascular tissuem in cells around the quiescent center, in floral organs at the tips of young siliques and in the joint region between the silique and the pedicel. Barely detectable in mature leaves or siliques.

Its subcellular location is the plastid. It is found in the chloroplast. It localises to the peroxisome. It functions in the pathway amino-acid biosynthesis; L-isoleucine biosynthesis; L-isoleucine from 2-oxobutanoate: step 1/4. The protein operates within amino-acid biosynthesis; L-valine biosynthesis; L-valine from pyruvate: step 1/4. Regulatory subunit of acetohydroxy-acid synthase. Involved in the feed-back inhibition by branched-chain amino acids but not in herbicide tolerance. May play a role in valine and isoleucine-mediated feedback inhibition in roots. In vitro, inhibited by valine, but not leucine or isoleucine. Required for reproductive development and sodium homeostasis. The protein is Acetolactate synthase small subunit 2, chloroplastic of Arabidopsis thaliana (Mouse-ear cress).